Here is a 466-residue protein sequence, read N- to C-terminus: Tubulointerstitial nephritis antigen-like (466 aa).

The signal sequence occupies residues 1–21; the sequence is MWGCWLGLLLLLLAGQAALEA. Residues 49 to 96 enclose the SMB domain; the sequence is EQDMCCRGRADECALPYLGATCYCDLFCNRTVSDCCPDFWDFCLGIPP. 5 disulfides stabilise this stretch: cysteine 53-cysteine 72, cysteine 70-cysteine 72, cysteine 70-cysteine 84, cysteine 76-cysteine 83, and cysteine 84-cysteine 91. Asparagine 77 is a glycosylation site (N-linked (GlcNAc...) asparagine). Asparagine 160 carries an N-linked (GlcNAc...) asparagine glycan.

It belongs to the peptidase C1 family. Post-translationally, glycosylated. As to expression, highly expressed in kidney, heart and adrenocortical cells of adrenal glands. Moderately expressed in spleen and liver. Also found in prostate, seminal vesicle, epididymis and testis in male reproductive organs. In adrenal glands is found in the outer cortical regions corresponding to the zona glomerulosa (zG) and the undifferentiated cell zone (zU) (at protein level).

It localises to the secreted. Functionally, may be implicated in the adrenocortical zonation and in mechanisms for repressing the CYP11B1 gene expression in adrenocortical cells. This is a non catalytic peptidase C1 family protein. This chain is Tubulointerstitial nephritis antigen-like (Tinagl1), found in Mus musculus (Mouse).